A 317-amino-acid chain; its full sequence is Mitochondrial thiamine pyrophosphate carrier 1 (317 aa).

6 helical membrane-spanning segments follow: residues A21–V41, V86–L106, L122–L142, G176–E196, L207–F227, and G281–Y300. 3 Solcar repeats span residues V22–A109, P116–A201, and G206–L306.

The protein belongs to the mitochondrial carrier (TC 2.A.29) family.

It is found in the mitochondrion inner membrane. In terms of biological role, mitochondrial transporter that mediates uptake of thiamine pyrophosphate (ThPP) into mitochondria. This Eremothecium gossypii (strain ATCC 10895 / CBS 109.51 / FGSC 9923 / NRRL Y-1056) (Yeast) protein is Mitochondrial thiamine pyrophosphate carrier 1 (TPC1).